We begin with the raw amino-acid sequence, 1171 residues long: 7,8-linoleate diol synthase (1171 aa).

Positions 1–22 are enriched in low complexity; it reads MASSSSSGSSTRSSSPSDPPSS. Positions 1–56 are disordered; that stretch reads MASSSSSGSSTRSSSPSDPPSSFFQKLGAFLGLFSKPQPPRPDYPHAPGNSAREEQ. Positions 114 to 457 are fatty acid alpha-dioxygenase; the sequence is TDGLITGLWE…DGSFEDEGLI (344 aa). Residue His-213 coordinates heme b. Ca(2+)-binding residues include Asp-214, Ser-229, Tyr-231, Asp-233, and Ser-235. Tyr-385 is an active-site residue. A heme b-binding site is contributed by His-388. Residues 675–1171 are epoxy alcohol synthase; the sequence is KILNNQKDFK…PMNMKIRWDD (497 aa). The disordered stretch occupies residues 873–900; it reads GLANGGANGHANGNANGHTNGNGIHQNG. Positions 881 to 895 are enriched in low complexity; sequence GHANGNANGHTNGNG. Cys-1089 serves as a coordination point for heme.

In the N-terminal section; belongs to the peroxidase family. The protein in the C-terminal section; belongs to the cytochrome P450 family. In terms of assembly, homotetramer. Heme b serves as cofactor. It depends on Ca(2+) as a cofactor. The cofactor is heme.

It carries out the reaction (9Z,12Z)-octadecadienoate + O2 = (8R,9Z,12Z)-8-hydroperoxyoctadeca-9,12-dienoate. The catalysed reaction is (8R,9Z,12Z)-8-hydroperoxyoctadeca-9,12-dienoate = (7S,8S,9Z,12Z)-7,8-dihydroxyoctadeca-9,12-dienoate. Its function is as follows. 7,8-linoleate diol synthase is a bifunctional enzyme that converts linoleic acid (18:2n-6) into 8-hydroperoxy-8(E),12(Z)-octadecadienoic acid (8-HPODE) and then catalyzes the isomerization of the resulting hydroperoxide to 7,8-dihydroxy-9(Z),12(Z)-octadecadienoic acid (7,8-DiHODE). In Pyricularia oryzae (strain 70-15 / ATCC MYA-4617 / FGSC 8958) (Rice blast fungus), this protein is 7,8-linoleate diol synthase.